The following is a 330-amino-acid chain: Ketol-acid reductoisomerase (NADP(+)) (330 aa).

The 181-residue stretch at 1–181 folds into the KARI N-terminal Rossmann domain; sequence MKVFYDSDFK…GLSRAGVIQT (181 aa). NADP(+)-binding positions include 24–27, Arg47, Ser52, and 82–85; these read YGSQ and DELQ. The active site involves His107. Gly133 lines the NADP(+) pocket. A KARI C-terminal knotted domain is found at 182–327; sequence TFKEETETDL…AKLRKMCGLE (146 aa). Mg(2+) is bound by residues Asp190, Glu194, Glu226, and Glu230. Residue Ser251 participates in substrate binding.

Belongs to the ketol-acid reductoisomerase family. The cofactor is Mg(2+).

The catalysed reaction is (2R)-2,3-dihydroxy-3-methylbutanoate + NADP(+) = (2S)-2-acetolactate + NADPH + H(+). The enzyme catalyses (2R,3R)-2,3-dihydroxy-3-methylpentanoate + NADP(+) = (S)-2-ethyl-2-hydroxy-3-oxobutanoate + NADPH + H(+). The protein operates within amino-acid biosynthesis; L-isoleucine biosynthesis; L-isoleucine from 2-oxobutanoate: step 2/4. Its pathway is amino-acid biosynthesis; L-valine biosynthesis; L-valine from pyruvate: step 2/4. Functionally, involved in the biosynthesis of branched-chain amino acids (BCAA). Catalyzes an alkyl-migration followed by a ketol-acid reduction of (S)-2-acetolactate (S2AL) to yield (R)-2,3-dihydroxy-isovalerate. In the isomerase reaction, S2AL is rearranged via a Mg-dependent methyl migration to produce 3-hydroxy-3-methyl-2-ketobutyrate (HMKB). In the reductase reaction, this 2-ketoacid undergoes a metal-dependent reduction by NADPH to yield (R)-2,3-dihydroxy-isovalerate. The protein is Ketol-acid reductoisomerase (NADP(+)) of Methanococcus maripaludis (strain DSM 14266 / JCM 13030 / NBRC 101832 / S2 / LL).